The following is a 75-amino-acid chain: Large ribosomal subunit protein bL31 (75 aa).

Part of the 50S ribosomal subunit.

In terms of biological role, binds the 23S rRNA. The polypeptide is Large ribosomal subunit protein bL31 (Rhodopseudomonas palustris (strain ATCC BAA-98 / CGA009)).